The following is a 438-amino-acid chain: GTPase Der (438 aa).

EngA-type G domains follow at residues 4-168 and 177-352; these read PIVA…PKGY and IRIA…TNYS. GTP contacts are provided by residues 10 to 17, 57 to 61, 120 to 123, 183 to 190, 230 to 234, and 295 to 298; these read GRPNVGKS, DTGGI, NKID, GKPNVGKS, DTAGL, and NKWD. A KH-like domain is found at 353-437; the sequence is KRISTGVLND…GIKMEFRERK (85 aa).

Belongs to the TRAFAC class TrmE-Era-EngA-EngB-Septin-like GTPase superfamily. EngA (Der) GTPase family. As to quaternary structure, associates with the 50S ribosomal subunit.

Functionally, GTPase that plays an essential role in the late steps of ribosome biogenesis. The sequence is that of GTPase Der from Clostridium tetani (strain Massachusetts / E88).